A 194-amino-acid chain; its full sequence is dTTP/UTP pyrophosphatase (194 aa).

The active-site Proton acceptor is Asp73.

This sequence belongs to the Maf family. YhdE subfamily. Requires a divalent metal cation as cofactor.

The protein resides in the cytoplasm. It carries out the reaction dTTP + H2O = dTMP + diphosphate + H(+). It catalyses the reaction UTP + H2O = UMP + diphosphate + H(+). Nucleoside triphosphate pyrophosphatase that hydrolyzes dTTP and UTP. May have a dual role in cell division arrest and in preventing the incorporation of modified nucleotides into cellular nucleic acids. The polypeptide is dTTP/UTP pyrophosphatase (Clostridium botulinum (strain 657 / Type Ba4)).